We begin with the raw amino-acid sequence, 705 residues long: Elongation factor G (705 aa).

Residues 8-290 (EKYRNIGICA…GVVEYLPAPN (283 aa)) enclose the tr-type G domain. Residues 17 to 24 (AHVDAGKT), 88 to 92 (DTPGH), and 142 to 145 (NKMD) contribute to the GTP site.

It belongs to the TRAFAC class translation factor GTPase superfamily. Classic translation factor GTPase family. EF-G/EF-2 subfamily.

The protein localises to the cytoplasm. In terms of biological role, catalyzes the GTP-dependent ribosomal translocation step during translation elongation. During this step, the ribosome changes from the pre-translocational (PRE) to the post-translocational (POST) state as the newly formed A-site-bound peptidyl-tRNA and P-site-bound deacylated tRNA move to the P and E sites, respectively. Catalyzes the coordinated movement of the two tRNA molecules, the mRNA and conformational changes in the ribosome. In Francisella philomiragia subsp. philomiragia (strain ATCC 25017 / CCUG 19701 / FSC 153 / O#319-036), this protein is Elongation factor G.